Consider the following 108-residue polypeptide: Transmembrane protein 213 (108 aa).

An N-terminal signal peptide occupies residues 1–27 (MKRLHLAPWTSLVLGLAFLSFHPVYLA). At 28 to 71 (EASSGSNSTSTVHHPENLETLEQCPNVDFCPQAARCCHTGVDEY) the chain is on the extracellular side. The N-linked (GlcNAc...) asparagine glycan is linked to Asn-34. The helical transmembrane segment at 72–92 (GWIAAAVGWSLLFLTLILLCV) threads the bilayer. At 93–108 (DKLMKLTPDESKDLQA) the chain is on the cytoplasmic side.

It localises to the membrane. The sequence is that of Transmembrane protein 213 (TMEM213) from Bos taurus (Bovine).